Reading from the N-terminus, the 229-residue chain is Large ribosomal subunit protein uL1 (229 aa).

Belongs to the universal ribosomal protein uL1 family. Part of the 50S ribosomal subunit.

In terms of biological role, binds directly to 23S rRNA. The L1 stalk is quite mobile in the ribosome, and is involved in E site tRNA release. Functionally, protein L1 is also a translational repressor protein, it controls the translation of the L11 operon by binding to its mRNA. The polypeptide is Large ribosomal subunit protein uL1 (Phytoplasma australiense).